The chain runs to 210 residues: Transcriptional regulator MxiE (210 aa).

Positions 99–199 (YHLVLYLLRT…GFSARELSNI (101 aa)) constitute an HTH araC/xylS-type domain. 2 consecutive DNA-binding regions (H-T-H motif) follow at residues 118–139 (KSLT…RKAL) and 166–189 (ITSA…KTRL).

In terms of biological role, necessary for the secretion of ipa invasins. Probable transcriptional regulatory protein. This Shigella flexneri protein is Transcriptional regulator MxiE (mxiE).